The following is a 508-amino-acid chain: Argininosuccinate lyase (508 aa).

This sequence belongs to the lyase 1 family. Argininosuccinate lyase subfamily.

Its subcellular location is the cytoplasm. It catalyses the reaction 2-(N(omega)-L-arginino)succinate = fumarate + L-arginine. It functions in the pathway amino-acid biosynthesis; L-arginine biosynthesis; L-arginine from L-ornithine and carbamoyl phosphate: step 3/3. This chain is Argininosuccinate lyase, found in Methanopyrus kandleri (strain AV19 / DSM 6324 / JCM 9639 / NBRC 100938).